A 158-amino-acid chain; its full sequence is NADH-quinone oxidoreductase subunit B (158 aa).

Residues Cys37, Cys38, Cys102, and Cys132 each contribute to the [4Fe-4S] cluster site.

It belongs to the complex I 20 kDa subunit family. As to quaternary structure, NDH-1 is composed of 14 different subunits. Subunits NuoB, C, D, E, F, and G constitute the peripheral sector of the complex. [4Fe-4S] cluster serves as cofactor.

Its subcellular location is the cell inner membrane. It carries out the reaction a quinone + NADH + 5 H(+)(in) = a quinol + NAD(+) + 4 H(+)(out). Functionally, NDH-1 shuttles electrons from NADH, via FMN and iron-sulfur (Fe-S) centers, to quinones in the respiratory chain. Couples the redox reaction to proton translocation (for every two electrons transferred, four hydrogen ions are translocated across the cytoplasmic membrane), and thus conserves the redox energy in a proton gradient. The chain is NADH-quinone oxidoreductase subunit B from Bordetella parapertussis (strain 12822 / ATCC BAA-587 / NCTC 13253).